Here is a 517-residue protein sequence, read N- to C-terminus: Crotonobetaine/carnitine--CoA ligase (517 aa).

It belongs to the ATP-dependent AMP-binding enzyme family.

It carries out the reaction 4-(trimethylamino)butanoate + ATP + CoA = 4-(trimethylamino)butanoyl-CoA + AMP + diphosphate. The catalysed reaction is crotonobetaine + ATP + CoA = crotonobetainyl-CoA + AMP + diphosphate. It catalyses the reaction (R)-carnitine + ATP + CoA = (R)-carnitinyl-CoA + AMP + diphosphate. It functions in the pathway amine and polyamine metabolism; carnitine metabolism. Its function is as follows. Catalyzes the transfer of CoA to carnitine, generating the initial carnitinyl-CoA needed for the CaiB reaction cycle. Also has activity toward crotonobetaine and gamma-butyrobetaine. The polypeptide is Crotonobetaine/carnitine--CoA ligase (Citrobacter koseri (strain ATCC BAA-895 / CDC 4225-83 / SGSC4696)).